Reading from the N-terminus, the 75-residue chain is Small ribosomal subunit protein bS18 (75 aa).

This sequence belongs to the bacterial ribosomal protein bS18 family. As to quaternary structure, part of the 30S ribosomal subunit. Forms a tight heterodimer with protein bS6.

Functionally, binds as a heterodimer with protein bS6 to the central domain of the 16S rRNA, where it helps stabilize the platform of the 30S subunit. In Cereibacter sphaeroides (strain ATCC 17029 / ATH 2.4.9) (Rhodobacter sphaeroides), this protein is Small ribosomal subunit protein bS18.